We begin with the raw amino-acid sequence, 856 residues long: Leucine--tRNA ligase (856 aa).

The short motif at 53-63 (PYPSGNLHMGH) is the 'HIGH' region element. The 'KMSKS' region motif lies at 622-626 (KMSKS). Residue Lys-625 participates in ATP binding.

This sequence belongs to the class-I aminoacyl-tRNA synthetase family.

The protein localises to the cytoplasm. The enzyme catalyses tRNA(Leu) + L-leucine + ATP = L-leucyl-tRNA(Leu) + AMP + diphosphate. The chain is Leucine--tRNA ligase from Prochlorococcus marinus (strain AS9601).